The sequence spans 450 residues: Glutamate-1-semialdehyde 2,1-aminomutase (450 aa).

Lys262 bears the N6-(pyridoxal phosphate)lysine mark.

It belongs to the class-III pyridoxal-phosphate-dependent aminotransferase family. HemL subfamily. Homodimer. The cofactor is pyridoxal 5'-phosphate.

It is found in the cytoplasm. The catalysed reaction is (S)-4-amino-5-oxopentanoate = 5-aminolevulinate. The protein operates within porphyrin-containing compound metabolism; protoporphyrin-IX biosynthesis; 5-aminolevulinate from L-glutamyl-tRNA(Glu): step 2/2. In Campylobacter hominis (strain ATCC BAA-381 / DSM 21671 / CCUG 45161 / LMG 19568 / NCTC 13146 / CH001A), this protein is Glutamate-1-semialdehyde 2,1-aminomutase.